The following is a 517-amino-acid chain: Putative pumilio homolog 21 (517 aa).

Disordered regions lie at residues 33–57 (NHQE…PPLL), 69–94 (KNNQ…PPLV), 107–130 (NHQE…PLLT), and 175–201 (FTPS…PPLS). Residues 42–51 (NTNINSNNNH) are compositionally biased toward low complexity. Residues 69–84 (KNNQEPGESGNTTINR) show a composition bias toward polar residues. Residues 148–502 (ESSNNNYPNL…NTLRVIQEEI (355 aa)) form the PUM-HD domain. Residues 177–190 (PSSLTQPDDSSSRY) show a composition bias toward polar residues. Residues 258–293 (TTKRIFLHLATNQYGSQALRILFRRSPSLDHLLFCA) form a Pumilio 1; degenerate repeat. The Pumilio 2 repeat unit spans residues 294–328 (VDTNFFLLMSDKYGRGLIIPAIRAVDKTKKESLYK). The Pumilio 3; degenerate repeat unit spans residues 329 to 363 (LTYEYTLHLARLETGCLALNNVLQEIRGIYRDLIF). 3 Pumilio repeats span residues 364-400 (ECVA…AIAE), 401-437 (RLRG…EEFR), and 438-473 (GNAK…PLLR).

Its subcellular location is the cytoplasm. In terms of biological role, sequence-specific RNA-binding protein that regulates translation and mRNA stability by binding the 3'-UTR of target mRNAs. This Arabidopsis thaliana (Mouse-ear cress) protein is Putative pumilio homolog 21 (APUM21).